A 491-amino-acid chain; its full sequence is Ketol-acid reductoisomerase (NADP(+)) (491 aa).

One can recognise a KARI N-terminal Rossmann domain in the interval 15–208 (AQLGKCRFMA…GGHRAGVLES (194 aa)). Residues 45-48 (CGAQ), Arg68, Arg76, Ser78, and 108-110 (DKQ) each bind NADP(+). Residue His132 is part of the active site. Gly158 lines the NADP(+) pocket. KARI C-terminal knotted domains follow at residues 209–344 (SFVA…TAPQ) and 345–484 (YEGK…MTDM). Residues Asp217, Glu221, Glu389, and Glu393 each contribute to the Mg(2+) site. Ser414 contacts substrate.

It belongs to the ketol-acid reductoisomerase family. It depends on Mg(2+) as a cofactor.

It catalyses the reaction (2R)-2,3-dihydroxy-3-methylbutanoate + NADP(+) = (2S)-2-acetolactate + NADPH + H(+). The enzyme catalyses (2R,3R)-2,3-dihydroxy-3-methylpentanoate + NADP(+) = (S)-2-ethyl-2-hydroxy-3-oxobutanoate + NADPH + H(+). It participates in amino-acid biosynthesis; L-isoleucine biosynthesis; L-isoleucine from 2-oxobutanoate: step 2/4. Its pathway is amino-acid biosynthesis; L-valine biosynthesis; L-valine from pyruvate: step 2/4. Functionally, involved in the biosynthesis of branched-chain amino acids (BCAA). Catalyzes an alkyl-migration followed by a ketol-acid reduction of (S)-2-acetolactate (S2AL) to yield (R)-2,3-dihydroxy-isovalerate. In the isomerase reaction, S2AL is rearranged via a Mg-dependent methyl migration to produce 3-hydroxy-3-methyl-2-ketobutyrate (HMKB). In the reductase reaction, this 2-ketoacid undergoes a metal-dependent reduction by NADPH to yield (R)-2,3-dihydroxy-isovalerate. The protein is Ketol-acid reductoisomerase (NADP(+)) of Klebsiella pneumoniae subsp. pneumoniae (strain ATCC 700721 / MGH 78578).